A 326-amino-acid chain; its full sequence is GTP 3',8-cyclase (326 aa).

The Radical SAM core domain maps to 7 to 232 (GFGRSFPYLR…PRAADAGPAR (226 aa)). Arg16 serves as a coordination point for GTP. Residues Cys23 and Cys27 each contribute to the [4Fe-4S] cluster site. Tyr29 contacts S-adenosyl-L-methionine. Cys30 serves as a coordination point for [4Fe-4S] cluster. Arg65 contacts GTP. Residue Gly69 coordinates S-adenosyl-L-methionine. Thr96 provides a ligand contact to GTP. Residue Ser120 coordinates S-adenosyl-L-methionine. Lys157 is a binding site for GTP. Position 191 (Met191) interacts with S-adenosyl-L-methionine. Cys254 and Cys257 together coordinate [4Fe-4S] cluster. Position 259–261 (259–261 (RLR)) interacts with GTP. Cys271 is a binding site for [4Fe-4S] cluster.

It belongs to the radical SAM superfamily. MoaA family. In terms of assembly, monomer and homodimer. The cofactor is [4Fe-4S] cluster.

It carries out the reaction GTP + AH2 + S-adenosyl-L-methionine = (8S)-3',8-cyclo-7,8-dihydroguanosine 5'-triphosphate + 5'-deoxyadenosine + L-methionine + A + H(+). It functions in the pathway cofactor biosynthesis; molybdopterin biosynthesis. Its function is as follows. Catalyzes the cyclization of GTP to (8S)-3',8-cyclo-7,8-dihydroguanosine 5'-triphosphate. The polypeptide is GTP 3',8-cyclase (Stenotrophomonas maltophilia (strain R551-3)).